The chain runs to 293 residues: MNDYLIKAINASKDLRLLTINGKDLVAEAQKRHDTWSASSAVLGRSLLGTLLLAGAELKGDQELTLRLLGDGPVGAAVVTAKSDLTVKGYVQNNHVALPAREDGHIDVKKAVGKGWLQVTKDLGLKQPYTGEVPIVSGEIAEDLTYYLAKSEQIPSAVGLSVFVNPNDTIGAAGGFLLQALPGASEELLQETEDRIKALPQLSSAFLDGMTPEDLAKKILGDDCKILEKDEVSYHCDCSKEKYAGMLETLKGSQLKEMIDEDHGAELVCNFCGNKYNFTEAELQAILDKKLGK.

2 disulfides stabilise this stretch: Cys236–Cys238 and Cys269–Cys272.

The protein belongs to the HSP33 family. Post-translationally, under oxidizing conditions two disulfide bonds are formed involving the reactive cysteines. Under reducing conditions zinc is bound to the reactive cysteines and the protein is inactive.

Its subcellular location is the cytoplasm. In terms of biological role, redox regulated molecular chaperone. Protects both thermally unfolding and oxidatively damaged proteins from irreversible aggregation. Plays an important role in the bacterial defense system toward oxidative stress. This Lactobacillus delbrueckii subsp. bulgaricus (strain ATCC 11842 / DSM 20081 / BCRC 10696 / JCM 1002 / NBRC 13953 / NCIMB 11778 / NCTC 12712 / WDCM 00102 / Lb 14) protein is 33 kDa chaperonin.